Reading from the N-terminus, the 210-residue chain is Regulator of G-protein signaling 17 (210 aa).

The tract at residues 1–21 (MRKRQQSQNEGTSAVSQAPGN) is disordered. An RGS domain is found at 84–200 (NFDKMMKTPA…LNSQIYKSLV (117 aa)).

In terms of assembly, interacts with GNAI1 and GNAQ. Interacts with GNAZ and GNAI2. Forms a complex with mu-opioid receptors and G(alpha)z/i2 subunits, including GNAZ and GNAI2; the formation of this complex results in mu-opioid receptor desensitization. In terms of processing, N- and O-glycosylated in synapsomal membranes. Post-translationally, serine phosphorylated in synapsomal membranes. Sumoylated with SUMO1 and SUM02 in synaptosomes. The sumoylated forms act as a scaffold for sequestering mu-opioid receptor-activated G(alpha) subunits.

The protein localises to the membrane. It localises to the synapse. It is found in the synaptosome. Its subcellular location is the nucleus. The protein resides in the cytoplasm. Functionally, regulates G protein-coupled receptor signaling cascades, including signaling via muscarinic acetylcholine receptor CHRM2 and dopamine receptor DRD2. Inhibits signal transduction by increasing the GTPase activity of G protein alpha subunits, thereby driving them into their inactive GDP-bound form. Binds selectively to GNAZ and GNAI2 subunits, accelerates their GTPase activity and regulates their signaling activities. Negatively regulates mu-opioid receptor-mediated activation of the G-proteins. The sequence is that of Regulator of G-protein signaling 17 (RGS17) from Gallus gallus (Chicken).